The primary structure comprises 395 residues: RNA demethylase ALKBH5 (395 aa).

2 disordered regions span residues 1-28 (MAAA…AGSR) and 47-83 (AAEP…EEEA). Position 2 is an N-acetylalanine (alanine 2). A Glycyl lysine isopeptide (Lys-Gly) (interchain with G-Cter in ubiquitin) cross-link involves residue lysine 58. Residues 60–83 (KYQEDSDPERSDYEEHQLQKEEEA) are compositionally biased toward basic and acidic residues. Phosphoserine is present on residues serine 65 and serine 70. Residues 68 to 117 (ERSDYEEHQLQKEEEARKVKSGIRQIRLFSQDECSKIEARIDEVVSRAEK) are a coiled coil. Position 72 is a phosphotyrosine (tyrosine 72). Lysine 87 is covalently cross-linked (Glycyl lysine isopeptide (Lys-Gly) (interchain with G-Cter in SUMO1)). Position 88 is a phosphoserine (serine 88). N6-acetyllysine is present on lysine 133. The active site involves tyrosine 140. Asparagine 194, tyrosine 196, and histidine 205 together coordinate 2-oxoglutarate. Cysteine 231 and cysteine 268 are disulfide-bonded. At lysine 236 the chain carries N6-acetyllysine. 2-oxoglutarate-binding residues include histidine 267 and arginine 278. The interval 294-395 (ETKSLSSSTL…PTRKVKMRRH (102 aa)) is disordered. Positions 296-306 (KSLSSSTLPPS) are enriched in low complexity. Residue lysine 322 forms a Glycyl lysine isopeptide (Lys-Gly) (interchain with G-Cter in SUMO1) linkage. A Phosphoserine modification is found at serine 326. A Glycyl lysine isopeptide (Lys-Gly) (interchain with G-Cter in SUMO2) cross-link involves residue lysine 329. Positions 329–350 (KADPDAAHRPRILEMDKEENRR) are enriched in basic and acidic residues. At arginine 360 the chain carries Omega-N-methylarginine. Phosphoserine occurs at positions 362, 372, 375, and 385.

Belongs to the alkB family. Monomer. Interacts with RBM33; promoting desumoylation by SENP1 and recruitment to N(6)-methyladenosine-containing mRNAs. Interacts (when acetylated by KAT8) with PSPC1; interaction facilitates recognition of N(6)-methyladenosine (m6A) mRNA. Requires Fe(2+) as cofactor. Post-translationally, phosphorylated at Ser-88 and Ser-326 in response to reactive oxygen species (ROS), promoting sumoylation and inactivation. Acetylated by KAT8 at Lys-236, promoting interaction with PSPC1, thereby facilitating recognition of N(6)-methyladenosine (m6A) mRNA by ALKBH5. Deacetylated at Lys-236 by HDAC7. In terms of processing, sumoylated at Lys-87 and Lys-322 by PIAS4 following phosphorylation at Ser-88 and Ser-326 in response to reactive oxygen species (ROS), inhibiting the RNA demethylase activity. Desumoylated by SENP1; relieving RNA demethylase inhibition, leading to N(6)-methyladenosine-containing mRNAs demethylation. Post-translationally, ubiquitinated at Lys-58 via 'Lys-48'-linked polyubiquitin chain, leading to its degradation by the proteasome. Deubiquitinated at Lys-58 by USP9X, promoting its stabilizazion. Widely expressed, with highest expression in testis. In testis, present in almost all testicular cell types except elongating and elongated spermatids (at protein level). Among spermatogenic cells, present at high level in spermatocytes; medium levels in spermatogonia and lower levels in round spermatids (at protein level).

The protein resides in the nucleus speckle. The enzyme catalyses an N(6)-methyladenosine in mRNA + 2-oxoglutarate + O2 = an adenosine in mRNA + formaldehyde + succinate + CO2. RNA demethylase activity is inhibited following sumoylation. Inhibition is relieved following desumoylation. Inhibited by histone demethylase inhibitor IOX1. Its function is as follows. Dioxygenase that specifically demethylates N(6)-methyladenosine (m6A) RNA, the most prevalent internal modification of messenger RNA (mRNA) in higher eukaryotes. Demethylates RNA by oxidative demethylation, which requires molecular oxygen, alpha-ketoglutarate and iron. Demethylation of m6A mRNA affects mRNA processing, translation and export. Can also demethylate N(6)-methyladenosine in single-stranded DNA (in vitro). Required for the late meiotic and haploid phases of spermatogenesis by mediating m6A demethylation in spermatocytes and round spermatids: m6A demethylation of target transcripts is required for correct splicing and the production of longer 3'-UTR mRNAs in male germ cells. Involved in paraspeckle assembly, a nuclear membraneless organelle, by undergoing liquid-liquid phase separation. Paraspeckle assembly is coupled with m6A demethylation of RNAs, such as NEAT1 non-coding RNA. Also acts as a negative regulator of T-cell development: inhibits gamma-delta T-cell proliferation via demethylation of JAG1 and NOTCH2 transcripts. Inhibits regulatory T-cell (Treg) recruitment by mediating demethylation and destabilization of CCL28 mRNAs. In Mus musculus (Mouse), this protein is RNA demethylase ALKBH5.